The following is a 243-amino-acid chain: Small ribosomal subunit protein eS4 (243 aa).

The 63-residue stretch at 43-105 folds into the S4 RNA-binding domain; the sequence is IPLLYIVRDY…TGEHYRVLPN (63 aa).

It belongs to the eukaryotic ribosomal protein eS4 family.

In Pyrococcus horikoshii (strain ATCC 700860 / DSM 12428 / JCM 9974 / NBRC 100139 / OT-3), this protein is Small ribosomal subunit protein eS4 (rps4e).